Here is a 246-residue protein sequence, read N- to C-terminus: DNA repair protein RecO (246 aa).

This sequence belongs to the RecO family.

Involved in DNA repair and RecF pathway recombination. This Cutibacterium acnes (strain DSM 16379 / KPA171202) (Propionibacterium acnes) protein is DNA repair protein RecO.